A 687-amino-acid chain; its full sequence is Probable intron-encoded endonuclease aI3 (687 aa).

The COX1 exons 1 to 3 encoded stretch occupies residues 1 to 374; it reads MKQMSYVTRW…NASMDVAFHD (374 aa). Helical transmembrane passes span 19-39, 69-89, 103-123, 152-172, 188-208, 240-260, 273-293, 315-335, 341-361, and 376-396; these read IGMTYLGFGMLSAMMGTGMSV, LLMMFFFIMPVWMGAFGNFFL, LNNISFWCLPPALVCMVCSVL, AMFAMHLTSMSSLLGAMNFMV, PLFAWAMFLTAMLLLLSLPVL, LFWFFGHPEVYILMMPGFGVM, FGEMGMLYAMGSIGFLGFLVW, MVIAVPTGIKIFSWLATIYGG, VPMLFALGFLFLFTMGGLTGV, and IFIYYVSFFLYTLYNMYNNYT. A COX1 intron 3 encoded region spans residues 375-687; the sequence is RIFIYYVSFF…KKESLMKFLK (313 aa).

The protein in the C-terminal section; belongs to the LAGLIDADG endonuclease family. In the N-terminal section; belongs to the heme-copper respiratory oxidase family. Post-translationally, the mature protein may arise from proteolytic cleavage of an in-frame translation of COX1 exons 1 to 3 plus intron 3, containing the aI3 open reading frame.

The protein localises to the mitochondrion. The protein resides in the membrane. Its function is as follows. Mitochondrial DNA endonuclease involved in intron homing. The polypeptide is Probable intron-encoded endonuclease aI3 (aI3) (Debaryomyces hansenii (strain ATCC 36239 / CBS 767 / BCRC 21394 / JCM 1990 / NBRC 0083 / IGC 2968) (Yeast)).